Consider the following 104-residue polypeptide: Large ribosomal subunit protein uL24 (104 aa).

It belongs to the universal ribosomal protein uL24 family. In terms of assembly, part of the 50S ribosomal subunit.

One of two assembly initiator proteins, it binds directly to the 5'-end of the 23S rRNA, where it nucleates assembly of the 50S subunit. In terms of biological role, one of the proteins that surrounds the polypeptide exit tunnel on the outside of the subunit. The chain is Large ribosomal subunit protein uL24 from Afipia carboxidovorans (strain ATCC 49405 / DSM 1227 / KCTC 32145 / OM5) (Oligotropha carboxidovorans).